Here is a 113-residue protein sequence, read N- to C-terminus: Large ribosomal subunit protein uL24 (113 aa).

The protein belongs to the universal ribosomal protein uL24 family. Part of the 50S ribosomal subunit.

In terms of biological role, one of two assembly initiator proteins, it binds directly to the 5'-end of the 23S rRNA, where it nucleates assembly of the 50S subunit. Its function is as follows. One of the proteins that surrounds the polypeptide exit tunnel on the outside of the subunit. In Micrococcus luteus (strain ATCC 4698 / DSM 20030 / JCM 1464 / CCM 169 / CCUG 5858 / IAM 1056 / NBRC 3333 / NCIMB 9278 / NCTC 2665 / VKM Ac-2230) (Micrococcus lysodeikticus), this protein is Large ribosomal subunit protein uL24.